We begin with the raw amino-acid sequence, 101 residues long: Protein mes1 (101 aa).

Residues 1 to 19 show a composition bias toward basic and acidic residues; that stretch reads MVNTDNKENEPPNMEKAHM. A disordered region spans residues 1-101; that stretch reads MVNTDNKENE…RSPNPLLSMR (101 aa).

As to quaternary structure, interacts with slp1.

The protein localises to the cytoplasm. It is found in the nucleus. Specifically required for meiosis II (MII). Binds to slp1, an activator of the anapahase promoting complex/cyclcosome (APC/C), and counteracts its function in promoting proteolysis of cdc13. By suppressing the degradation of cdc13 at anaphase I this protein may help maintain a sufficient level of cdc2 kinase activity to complete MII. The sequence is that of Protein mes1 (mes1) from Schizosaccharomyces pombe (strain 972 / ATCC 24843) (Fission yeast).